The sequence spans 192 residues: Imidazoleglycerol-phosphate dehydratase (192 aa).

This sequence belongs to the imidazoleglycerol-phosphate dehydratase family.

The protein resides in the cytoplasm. It carries out the reaction D-erythro-1-(imidazol-4-yl)glycerol 3-phosphate = 3-(imidazol-4-yl)-2-oxopropyl phosphate + H2O. It functions in the pathway amino-acid biosynthesis; L-histidine biosynthesis; L-histidine from 5-phospho-alpha-D-ribose 1-diphosphate: step 6/9. This Staphylococcus aureus (strain bovine RF122 / ET3-1) protein is Imidazoleglycerol-phosphate dehydratase.